The chain runs to 113 residues: MAKEQKMQSSPQALKAGHLPAVKAGGMRVSKKQGNEENSAPEKNAKKTLQEKPSSVLNMTKMQAMNILAGELEKLSHDFPGEAAQIAHQKPRPTVEKTILPKRLYIIQQPRRC.

The disordered stretch occupies residues 1-57 (MAKEQKMQSSPQALKAGHLPAVKAGGMRVSKKQGNEENSAPEKNAKKTLQEKPSSVL).

The protein belongs to the DAP-DAPL1 family. Associates with ribosomes; preventing translation. Interacts with eiF5a (eif5a and eif5a2); preventing translation.

In terms of biological role, ribosome-binding protein that promotes ribosome hibernation, a process during which ribosomes are stabilized in an inactive state and preserved from proteasomal degradation. Acts via its association with eiF5a (eif5a and eif5a2) at the polypeptide exit tunnel of the ribosome, preventing mRNA translation. Plays a key role in ribosome hibernation in the mature egg by preventing mRNA translation, leading to ribosome inactivation. Ribosomes, which are produced in large quantities during oogenesis, are stored and translationally repressed in the egg and early embryo. This Xenopus laevis (African clawed frog) protein is Death-associated protein-like 1.L (dapl1.L).